We begin with the raw amino-acid sequence, 576 residues long: MNEKHPGPLVVSGKLSDGERMKSESNFLRGTIAEDLNNGLTGGFSGDNFLLIRFHGMYQQDDRDIRAERAEQKLEPRHAMMLRCRLPGGIITPQQWLGIDKFAADNTLYGSIRITNRQTFQFHGILKGNVKPAHQLLNELGLDALATANDVNRNVLCTSNPVESALHQEAYEWAKKISEHLLPRTRAYAEIWLDAEKVATTDEEPILGATYLPRKFKTTVVIPPQNDVDLHANDLNFVAVADKGKLIGFNVLVGGGLSIAHGDKNTYPRKASEFGYIPLKHTLAIAEAVVTTQRDWGNRTDRKNAKTKYTLERVGVETFKAEVEKRAGVSFSAIKPYQFTGRGDRIGWVKGVDKKWHLTLFIENGRLLDYPGRSLKTGVAEIAKIHQGDFRLTANQNLIVAGVPEKDKARIEALAREHGLMDDNVTSQRENSMACVSFPTCPLAMAEAERFLPEFVTRVEGILQQHGLADEHIVLRVTGCPNGCGRALLAEVGLVGKAVGRYNLHLGGNREGTRIPRMYRENITADEILLITDQLVGRWAKERHVDEGFGDFVIRAGVIAPVIDSARDFYDVQEAM.

4 residues coordinate [4Fe-4S] cluster: Cys435, Cys441, Cys480, and Cys484. Residue Cys484 coordinates siroheme.

This sequence belongs to the nitrite and sulfite reductase 4Fe-4S domain family. In terms of assembly, alpha(8)-beta(8). The alpha component is a flavoprotein, the beta component is a hemoprotein. Siroheme is required as a cofactor. The cofactor is [4Fe-4S] cluster.

It carries out the reaction hydrogen sulfide + 3 NADP(+) + 3 H2O = sulfite + 3 NADPH + 4 H(+). The protein operates within sulfur metabolism; hydrogen sulfide biosynthesis; hydrogen sulfide from sulfite (NADPH route): step 1/1. Its function is as follows. Component of the sulfite reductase complex that catalyzes the 6-electron reduction of sulfite to sulfide. This is one of several activities required for the biosynthesis of L-cysteine from sulfate. The sequence is that of Sulfite reductase [NADPH] hemoprotein beta-component from Yersinia pseudotuberculosis serotype O:1b (strain IP 31758).